A 365-amino-acid chain; its full sequence is Galactoside alpha-(1,2)-fucosyltransferase 1 (365 aa).

The Cytoplasmic portion of the chain corresponds to 1–8 (MWPLSHRH). A helical; Signal-anchor for type II membrane protein membrane pass occupies residues 9 to 25 (LCLAFLLVCVLSAISFF). Topologically, residues 26–365 (LHIYQDSIRH…LSSLWTLAEP (340 aa)) are lumenal. Residues Asn-65, Asn-301, and Asn-327 are each glycosylated (N-linked (GlcNAc...) asparagine).

This sequence belongs to the glycosyltransferase 11 family.

It localises to the golgi apparatus. It is found in the golgi stack membrane. It catalyses the reaction a beta-D-galactosyl-(1-&gt;4)-N-acetyl-beta-D-glucosaminyl derivative + GDP-beta-L-fucose = an alpha-L-Fuc-(1-&gt;2)-beta-D-Gal-(1-&gt;4)-beta-D-GlcNAc derivative + GDP + H(+). It carries out the reaction a ganglioside GA1 + GDP-beta-L-fucose = a ganglioside Fuc-GA1 + GDP + H(+). The enzyme catalyses a beta-D-Gal-(1-&gt;3)-beta-D-GlcNAc-(1-&gt;3)-beta-D-Gal-(1-&gt;4)-beta-D-Glc-(1&lt;-&gt;1')-Cer(d18:1(4E)) + GDP-beta-L-fucose = alpha-L-fucosyl-(1-&gt;2)- beta-D-galactosyl-(1-&gt;3)-N-acetyl-beta-D-glucosaminyl-(1-&gt;3)-beta-D-galactosyl-(1-&gt;4)-beta-D-glucosyl-(1&lt;-&gt;1')-N-acylsphing-4-enine + GDP + H(+). The catalysed reaction is a neolactoside nLc4Cer(d18:1(4E)) + GDP-beta-L-fucose = a neolactoside IV(2)-alpha-Fuc-nLc4Cer(d18:1(4E)) + GDP + H(+). It catalyses the reaction a ganglioside GM1 + GDP-beta-L-fucose = a ganglioside Fuc-GM1 + GDP + H(+). It carries out the reaction beta-D-galactosyl-(1-&gt;3)-N-acetyl-D-galactosamine + GDP-beta-L-fucose = alpha-L-fucosyl-(1-&gt;2)-beta-D-galactosyl-(1-&gt;3)-N-acetyl-D-galactosamine + GDP + H(+). It participates in protein modification; protein glycosylation. Functionally, catalyzes the transfer of L-fucose, from a guanosine diphosphate-beta-L-fucose, to the terminal galactose residue of glycoconjugates through an alpha(1,2) linkage leading to H antigen synthesis that is an intermediate substrate in the synthesis of ABO blood group antigens. H antigen is essential for maturation of the glomerular layer of the main olfactory bulb, in cell migration and early cell-cell contacts during tumor associated angiogenesis. Preferentially fucosylates soluble lactose and to a lesser extent fucosylates glycolipids gangliosides GA1 and GM1a. The chain is Galactoside alpha-(1,2)-fucosyltransferase 1 from Leontocebus fuscicollis (Brown-mantled tamarin).